Consider the following 79-residue polypeptide: Acyl carrier protein (79 aa).

The Carrier domain maps to Ser2–Lys77. An O-(pantetheine 4'-phosphoryl)serine modification is found at Ser37.

Belongs to the acyl carrier protein (ACP) family. 4'-phosphopantetheine is transferred from CoA to a specific serine of apo-ACP by AcpS. This modification is essential for activity because fatty acids are bound in thioester linkage to the sulfhydryl of the prosthetic group.

The protein localises to the cytoplasm. It functions in the pathway lipid metabolism; fatty acid biosynthesis. In terms of biological role, carrier of the growing fatty acid chain in fatty acid biosynthesis. The protein is Acyl carrier protein of Acidiphilium cryptum (strain JF-5).